We begin with the raw amino-acid sequence, 522 residues long: Sugar carrier protein A (522 aa).

Residues 1-22 lie on the Cytoplasmic side of the membrane; that stretch reads MAGGSLAPAGVAKERAEQYQGK. 12 helical membrane passes run 23–43, 87–107, 121–141, 144–164, 173–193, 205–225, 286–306, 322–342, 351–371, 384–404, 430–450, and 453–473; these read VTFA…IFGY, AFTS…GPIT, ISFL…MLLL, IMLG…LSEM, LNIM…MVNY, LSLG…LLLP, LVMA…IILF, ALYS…ISIA, FLLI…AIIL, SFSV…GWSW, AVNL…LCAF, and GIFL…YIFL. Over 474–522 the chain is Cytoplasmic; sequence PETKGVPIEEMIFLWRKHWFWKKIVPGQPEVDDSRESMEMGEAVASRIK.

The protein belongs to the major facilitator superfamily. Sugar transporter (TC 2.A.1.1) family.

The protein localises to the membrane. In Ricinus communis (Castor bean), this protein is Sugar carrier protein A (STA).